The following is a 100-amino-acid chain: MPNCFSEEIAGIALTTRPLGLKHFEVKVFLVFYIITMVKIYIFLIRNKIMERSVGIKIHYRLSTNSYSINILSYTVLDYDISYEKLSSKLGEAEVQGLIM.

The helical transmembrane segment at 28–45 (VFLVFYIITMVKIYIFLI) threads the bilayer.

It localises to the membrane. This is an uncharacterized protein from Saccharomyces cerevisiae (strain ATCC 204508 / S288c) (Baker's yeast).